Reading from the N-terminus, the 316-residue chain is Protoheme IX farnesyltransferase (316 aa).

Helical transmembrane passes span 34-54, 55-75, 95-115, 118-138, 155-175, 182-202, 228-250, 254-273, and 287-307; these read VMSL…GHIN, PFIG…SGAL, IPAG…LSAF, IILG…TIFF, IVIG…CVTG, IVLF…LALF, IVIY…FASL, AFAT…VLRM, and FAFS…DYAI.

It belongs to the UbiA prenyltransferase family. Protoheme IX farnesyltransferase subfamily.

Its subcellular location is the cell inner membrane. The catalysed reaction is heme b + (2E,6E)-farnesyl diphosphate + H2O = Fe(II)-heme o + diphosphate. It participates in porphyrin-containing compound metabolism; heme O biosynthesis; heme O from protoheme: step 1/1. In terms of biological role, converts heme B (protoheme IX) to heme O by substitution of the vinyl group on carbon 2 of heme B porphyrin ring with a hydroxyethyl farnesyl side group. The chain is Protoheme IX farnesyltransferase from Rhizobium meliloti (strain 1021) (Ensifer meliloti).